We begin with the raw amino-acid sequence, 202 residues long: MTDSESAAAVSVDAAAYREAMSRLASAVHLITTDGPGGRAGFTASAVCSVSDAPPTLLVCINRASSAYAALTQNGTLCVNTLGEGHETVASLFGGRTPVDERFAAGTWRRLRSGAPALADALVSFDCRIVGRHAVGSHDVLYCAVEAVAASGEADALLYSERRYRTLPRTPRSGSAPAEPARAPRAVGARPAEGPALALRSA.

A disordered region spans residues 168 to 202; that stretch reads PRTPRSGSAPAEPARAPRAVGARPAEGPALALRSA. Residues 171–196 show a composition bias toward low complexity; it reads PRSGSAPAEPARAPRAVGARPAEGPA.

Belongs to the non-flavoprotein flavin reductase family. RutF subfamily.

The catalysed reaction is FMNH2 + NAD(+) = FMN + NADH + 2 H(+). Catalyzes the reduction of FMN to FMNH2 which is used to reduce pyrimidine by RutA via the Rut pathway. The protein is FMN reductase (NADH) RutF 1 of Methylorubrum extorquens (strain PA1) (Methylobacterium extorquens).